The following is a 468-amino-acid chain: Flavin-containing monooxygenase FMO GS-OX-like 1 (468 aa).

16–21 (GLGAAG) contributes to the FAD binding site. 211–216 (GSQASG) contacts NADP(+).

This sequence belongs to the FMO family. It depends on FAD as a cofactor.

Catalyzes the conversion of methylthioalkyl glucosinolates of any chain length into methylsulfinylalkyl glucosinolates. This chain is Flavin-containing monooxygenase FMO GS-OX-like 1, found in Arabidopsis thaliana (Mouse-ear cress).